The sequence spans 351 residues: Probable galacturonosyltransferase-like 4 (351 aa).

Over 1-8 the chain is Cytoplasmic; it reads MASRSLSY. Residues 9–29 traverse the membrane as a helical; Signal-anchor for type II membrane protein segment; it reads TQLLGLLSFILLLVTTTTMAV. At 30–351 the chain is on the lumenal side; it reads RVGVILHKPS…YRSSRHSLEE (322 aa). Residues Asn-96 and Asn-203 are each glycosylated (N-linked (GlcNAc...) asparagine).

This sequence belongs to the glycosyltransferase 8 family.

The protein resides in the golgi apparatus membrane. It participates in glycan metabolism; pectin biosynthesis. Its function is as follows. May be involved in pectin and/or xylans biosynthesis in cell walls. This chain is Probable galacturonosyltransferase-like 4 (GATL4), found in Arabidopsis thaliana (Mouse-ear cress).